Reading from the N-terminus, the 467-residue chain is 3-isopropylmalate dehydratase large subunit (467 aa).

[4Fe-4S] cluster is bound by residues C348, C409, and C412.

Belongs to the aconitase/IPM isomerase family. LeuC type 1 subfamily. In terms of assembly, heterodimer of LeuC and LeuD. It depends on [4Fe-4S] cluster as a cofactor.

The catalysed reaction is (2R,3S)-3-isopropylmalate = (2S)-2-isopropylmalate. Its pathway is amino-acid biosynthesis; L-leucine biosynthesis; L-leucine from 3-methyl-2-oxobutanoate: step 2/4. In terms of biological role, catalyzes the isomerization between 2-isopropylmalate and 3-isopropylmalate, via the formation of 2-isopropylmaleate. In Thiobacillus denitrificans (strain ATCC 25259 / T1), this protein is 3-isopropylmalate dehydratase large subunit.